We begin with the raw amino-acid sequence, 316 residues long: Protoheme IX farnesyltransferase 2 (316 aa).

A compositionally biased stretch (polar residues) spans 1 to 15; it reads MEQNLNSEQKPQSSA. A disordered region spans residues 1–24; that stretch reads MEQNLNSEQKPQSSAKPRGKSSRS. The next 7 helical transmembrane spans lie at 62–82, 117–137, 163–183, 188–208, 231–251, 252–272, and 293–313; these read IPEM…AGAF, IVML…AAAF, IGSI…STDI, IARF…AIAI, TYYQ…LFGS, LSVG…VMSI, and LFHM…GVIF.

The protein belongs to the UbiA prenyltransferase family. Protoheme IX farnesyltransferase subfamily. As to quaternary structure, interacts with CtaA.

Its subcellular location is the cell membrane. It carries out the reaction heme b + (2E,6E)-farnesyl diphosphate + H2O = Fe(II)-heme o + diphosphate. The protein operates within porphyrin-containing compound metabolism; heme O biosynthesis; heme O from protoheme: step 1/1. Converts heme B (protoheme IX) to heme O by substitution of the vinyl group on carbon 2 of heme B porphyrin ring with a hydroxyethyl farnesyl side group. The protein is Protoheme IX farnesyltransferase 2 of Lysinibacillus sphaericus (strain C3-41).